The primary structure comprises 360 residues: Peptide chain release factor 1 (360 aa).

Gln-235 is modified (N5-methylglutamine). The interval 285–313 (KRQQAEASTRRNLLGSGDRSDRNRTYNFP) is disordered.

It belongs to the prokaryotic/mitochondrial release factor family. Methylated by PrmC. Methylation increases the termination efficiency of RF1.

The protein localises to the cytoplasm. Functionally, peptide chain release factor 1 directs the termination of translation in response to the peptide chain termination codons UAG and UAA. The sequence is that of Peptide chain release factor 1 from Shigella boydii serotype 18 (strain CDC 3083-94 / BS512).